The following is a 137-amino-acid chain: Glutamate mutase sigma subunit (137 aa).

The B12-binding domain occupies 3 to 137 (EVNLVLGVIG…KALKEDLGLM (135 aa)). Residues 13–17 (ADVHA), histidine 16, 61–63 (SSL), and 93–97 (NLVVG) each bind adenosylcob(III)alamin.

The protein belongs to the methylaspartate mutase GlmS subunit family. As to quaternary structure, heterotetramer composed of 2 epsilon subunits (GlmE) and 2 sigma subunits (GlmS). GlmE exists as a homodimer and GlmS as a monomer. Adenosylcob(III)alamin serves as cofactor.

The enzyme catalyses (2S,3S)-3-methyl-L-aspartate = L-glutamate. Its pathway is amino-acid degradation; L-glutamate degradation via mesaconate pathway; acetate and pyruvate from L-glutamate: step 1/4. Functionally, catalyzes the carbon skeleton rearrangement of L-glutamate to L-threo-3-methylaspartate ((2S,3S)-3-methylaspartate). This chain is Glutamate mutase sigma subunit, found in Carboxydothermus hydrogenoformans (strain ATCC BAA-161 / DSM 6008 / Z-2901).